Here is a 286-residue protein sequence, read N- to C-terminus: Translocon-associated protein subunit alpha (286 aa).

Positions 1 to 23 are cleaved as a signal peptide; sequence MRVLPRLLLLLLLAFPAAVLLRG. The Lumenal segment spans residues 24 to 207; that stretch reads GPGGSLVAAQ…EREDGLDGET (184 aa). A compositionally biased stretch (acidic residues) spans 37–75; sequence EDEETVEDSIIEDEDDEAEVEEDEPTDLAEDKEEEDVSG. Residues 37–83 form a disordered region; the sequence is EDEETVEDSIIEDEDDEAEVEEDEPTDLAEDKEEEDVSGEPEASPSA. 2 N-linked (GlcNAc...) asparagine glycosylation sites follow: N136 and N191. A helical transmembrane segment spans residues 208-228; the sequence is IFMYMFLAGLGLLVVVGLHQL. At 229-286 the chain is on the cytoplasmic side; sequence LESRKRKRPIQKVEMGTSSQNDVDMSWIPQETLNQINKASPRRLPRKRAQKRSVGSDE. Phosphoserine is present on S247. The residue at position 260 (T260) is a Phosphothreonine. A disordered region spans residues 261 to 286; that stretch reads LNQINKASPRRLPRKRAQKRSVGSDE. S268 carries the post-translational modification Phosphoserine. Residues 268–279 show a composition bias toward basic residues; it reads SPRRLPRKRAQK.

Belongs to the TRAP-alpha family. Heterotetramer of TRAP-alpha, TRAP-beta, TRAP-delta and TRAP-gamma. Interacts with palmitoylated calnexin (CALX), the interaction is required for efficient folding of glycosylated proteins. Post-translationally, phosphorylated in its cytoplasmic tail.

Its subcellular location is the endoplasmic reticulum membrane. In terms of biological role, TRAP proteins are part of a complex whose function is to bind calcium to the ER membrane and thereby regulate the retention of ER resident proteins. May be involved in the recycling of the translocation apparatus after completion of the translocation process or may function as a membrane-bound chaperone facilitating folding of translocated proteins. In Canis lupus familiaris (Dog), this protein is Translocon-associated protein subunit alpha (SSR1).